A 167-amino-acid chain; its full sequence is NADH-quinone oxidoreductase subunit B 2 (167 aa).

Residues Cys-38, Cys-39, Cys-104, and Cys-133 each contribute to the [4Fe-4S] cluster site.

This sequence belongs to the complex I 20 kDa subunit family. NDH-1 is composed of 14 different subunits. Subunits NuoB, C, D, E, F, and G constitute the peripheral sector of the complex. Requires [4Fe-4S] cluster as cofactor.

It localises to the cell membrane. It carries out the reaction a quinone + NADH + 5 H(+)(in) = a quinol + NAD(+) + 4 H(+)(out). NDH-1 shuttles electrons from NADH, via FMN and iron-sulfur (Fe-S) centers, to quinones in the respiratory chain. The immediate electron acceptor for the enzyme in this species is believed to be ubiquinone. Couples the redox reaction to proton translocation (for every two electrons transferred, four hydrogen ions are translocated across the cytoplasmic membrane), and thus conserves the redox energy in a proton gradient. This Roseiflexus sp. (strain RS-1) protein is NADH-quinone oxidoreductase subunit B 2.